The chain runs to 275 residues: Formamidopyrimidine-DNA glycosylase (275 aa).

Residue proline 2 is the Schiff-base intermediate with DNA of the active site. Glutamate 3 serves as the catalytic Proton donor. The active-site Proton donor; for beta-elimination activity is the lysine 58. Residues histidine 92, arginine 111, and arginine 154 each coordinate DNA. The segment at 239–273 adopts an FPG-type zinc-finger fold; sequence HVYHRQGLPCQRCGTPIERIKVAQRGTHFCPHCQV. The Proton donor; for delta-elimination activity role is filled by arginine 263.

The protein belongs to the FPG family. In terms of assembly, monomer. Zn(2+) is required as a cofactor.

The catalysed reaction is Hydrolysis of DNA containing ring-opened 7-methylguanine residues, releasing 2,6-diamino-4-hydroxy-5-(N-methyl)formamidopyrimidine.. The enzyme catalyses 2'-deoxyribonucleotide-(2'-deoxyribose 5'-phosphate)-2'-deoxyribonucleotide-DNA = a 3'-end 2'-deoxyribonucleotide-(2,3-dehydro-2,3-deoxyribose 5'-phosphate)-DNA + a 5'-end 5'-phospho-2'-deoxyribonucleoside-DNA + H(+). Involved in base excision repair of DNA damaged by oxidation or by mutagenic agents. Acts as a DNA glycosylase that recognizes and removes damaged bases. Has a preference for oxidized purines, such as 7,8-dihydro-8-oxoguanine (8-oxoG). Has AP (apurinic/apyrimidinic) lyase activity and introduces nicks in the DNA strand. Cleaves the DNA backbone by beta-delta elimination to generate a single-strand break at the site of the removed base with both 3'- and 5'-phosphates. In Pediococcus pentosaceus (strain ATCC 25745 / CCUG 21536 / LMG 10740 / 183-1w), this protein is Formamidopyrimidine-DNA glycosylase.